Reading from the N-terminus, the 445-residue chain is Proton extrusion protein PxcA (445 aa).

The next 4 helical transmembrane spans lie at 227–247 (FILL…TFLI), 322–342 (AIAN…VVAF), 369–389 (LIIL…WEVI), and 405–425 (FNFL…KYWI).

Belongs to the CemA family.

Its subcellular location is the cell inner membrane. Its function is as follows. Required for H(+) efflux immediately after light irradiation to form a rapid H(+) concentration gradient across the thylakoid membranes. Together with PxcL, contributes to transient H(+) uptake following dark to light transition. This chain is Proton extrusion protein PxcA, found in Microcystis aeruginosa (strain NIES-843 / IAM M-2473).